The chain runs to 50 residues: Protein hunchback (50 aa).

C2H2-type zinc fingers lie at residues 1–5, 11–33, and 39–50; these read HLRNH, FKCG…MKSH, and YRCANCCYATKY.

This sequence belongs to the hunchback C2H2-type zinc-finger protein family.

Its subcellular location is the nucleus. Its function is as follows. Gap class segmentation protein that controls development of head structures. This chain is Protein hunchback (hb), found in Pholcus phalangioides (Longbodied cellar spider).